Reading from the N-terminus, the 185-residue chain is Crossover junction endodeoxyribonuclease RuvC (185 aa).

Active-site residues include Asp-7, Glu-68, and Asp-141. Mg(2+) is bound by residues Asp-7, Glu-68, and Asp-141.

This sequence belongs to the RuvC family. As to quaternary structure, homodimer which binds Holliday junction (HJ) DNA. The HJ becomes 2-fold symmetrical on binding to RuvC with unstacked arms; it has a different conformation from HJ DNA in complex with RuvA. In the full resolvosome a probable DNA-RuvA(4)-RuvB(12)-RuvC(2) complex forms which resolves the HJ. It depends on Mg(2+) as a cofactor.

Its subcellular location is the cytoplasm. It catalyses the reaction Endonucleolytic cleavage at a junction such as a reciprocal single-stranded crossover between two homologous DNA duplexes (Holliday junction).. The RuvA-RuvB-RuvC complex processes Holliday junction (HJ) DNA during genetic recombination and DNA repair. Endonuclease that resolves HJ intermediates. Cleaves cruciform DNA by making single-stranded nicks across the HJ at symmetrical positions within the homologous arms, yielding a 5'-phosphate and a 3'-hydroxyl group; requires a central core of homology in the junction. The consensus cleavage sequence is 5'-(A/T)TT(C/G)-3'. Cleavage occurs on the 3'-side of the TT dinucleotide at the point of strand exchange. HJ branch migration catalyzed by RuvA-RuvB allows RuvC to scan DNA until it finds its consensus sequence, where it cleaves and resolves the cruciform DNA. This is Crossover junction endodeoxyribonuclease RuvC from Mycobacterium sp. (strain MCS).